The chain runs to 226 residues: Guanylate kinase (226 aa).

In terms of domain architecture, Guanylate kinase-like spans 13 to 193 (GLLLVLSAPS…ALAQLQAIVR (181 aa)). 20–27 (APSGAGKT) lines the ATP pocket.

It belongs to the guanylate kinase family.

It localises to the cytoplasm. The enzyme catalyses GMP + ATP = GDP + ADP. Its function is as follows. Essential for recycling GMP and indirectly, cGMP. This Anaeromyxobacter dehalogenans (strain 2CP-C) protein is Guanylate kinase.